The sequence spans 107 residues: UPF0145 protein YbjQ (107 aa).

Belongs to the UPF0145 family.

This Salmonella dublin (strain CT_02021853) protein is UPF0145 protein YbjQ.